Here is a 66-residue protein sequence, read N- to C-terminus: Large ribosomal subunit protein uL29 (66 aa).

It belongs to the universal ribosomal protein uL29 family.

The protein is Large ribosomal subunit protein uL29 of Thermococcus sibiricus (strain DSM 12597 / MM 739).